A 369-amino-acid chain; its full sequence is Biglycan (369 aa).

The first 16 residues, 1–16 (MWPLWLVASLLALSQA), serve as a signal peptide directing secretion. Positions 17-37 (LPFEQKGFWDFTLDDGLPMLN) are excised as a propeptide. O-linked (Xyl...) (glycosaminoglycan) serine glycans are attached at residues S42 and S48. Intrachain disulfides connect C64/C70 and C68/C77. LRR repeat units lie at residues 83–103 (KAVP…NNDI), 104–127 (SELR…NNKI), 128–151 (SKIH…KNHL), 152–172 (VEIP…DNRI), 173–196 (RKVP…GNPL), 197–221 (ENSG…EAKL), 222–242 (TGIP…HNKI), 243–266 (QAIE…HNQI), 267–290 (RMIE…NNKL), 291–313 (SRVP…TNNI), 314–343 (TKVG…NNPV), and 344–369 (PYWE…NYKK). N-linked (GlcNAc...) asparagine glycosylation is found at N271 and N312. C322 and C355 are oxidised to a cystine.

Belongs to the small leucine-rich proteoglycan (SLRP) family. SLRP class I subfamily. In terms of assembly, homodimer. Forms a ternary complex with MFAP2 and ELN. Post-translationally, the two attached glycosaminoglycan chains can be either chondroitin sulfate or dermatan sulfate.

It is found in the secreted. It localises to the extracellular space. The protein localises to the extracellular matrix. In terms of biological role, may be involved in collagen fiber assembly. This is Biglycan (BGN) from Canis lupus familiaris (Dog).